The sequence spans 317 residues: Protein CbxX, plasmid (317 aa).

Position 85–92 (85–92 (GNPGTGKT)) interacts with ATP.

Belongs to the CbxX/CfxQ family.

Its function is as follows. Seems to be necessary for the expression of RuBisCO. The chain is Protein CbxX, plasmid (cbxXP) from Cupriavidus necator (strain ATCC 17699 / DSM 428 / KCTC 22496 / NCIMB 10442 / H16 / Stanier 337) (Ralstonia eutropha).